A 447-amino-acid chain; its full sequence is Cytochrome P450 BJ-4 homolog (447 aa).

Cys392 is a binding site for heme.

Belongs to the cytochrome P450 family. Heme serves as cofactor.

In terms of biological role, cytochromes P450 are a group of heme-thiolate monooxygenases. They oxidize a variety of structurally unrelated compounds, including steroids, fatty acids, and xenobiotics. The polypeptide is Cytochrome P450 BJ-4 homolog (cyp117A2) (Sinorhizobium fredii (strain NBRC 101917 / NGR234)).